The following is a 469-amino-acid chain: Argininosuccinate lyase (469 aa).

The protein belongs to the lyase 1 family. Argininosuccinate lyase subfamily.

The protein localises to the cytoplasm. The catalysed reaction is 2-(N(omega)-L-arginino)succinate = fumarate + L-arginine. Its pathway is amino-acid biosynthesis; L-arginine biosynthesis; L-arginine from L-ornithine and carbamoyl phosphate: step 3/3. The polypeptide is Argininosuccinate lyase (Burkholderia thailandensis (strain ATCC 700388 / DSM 13276 / CCUG 48851 / CIP 106301 / E264)).